The chain runs to 170 residues: uncharacterized protein (170 aa).

This sequence belongs to the mimivirus L223/L227/L812 family.

This is an uncharacterized protein from Acanthamoeba polyphaga mimivirus (APMV).